Here is a 669-residue protein sequence, read N- to C-terminus: NAD-dependent malic enzyme, mitochondrial (669 aa).

A compositionally biased stretch (polar residues) spans Ile-33 to Thr-43. The segment at Ile-33–Thr-68 is disordered. Residue Arg-142 participates in fumarate binding. Residue Tyr-187 is the Proton donor of the active site. The Proton acceptor role is filled by Lys-259. A divalent metal cation-binding residues include Glu-330, Asp-331, and Asp-354. Residues Ala-387 and Ala-390 each coordinate NAD(+). Residues Asn-499 and Asn-539 each coordinate (S)-malate.

This sequence belongs to the malic enzymes family. Mg(2+) is required as a cofactor. The cofactor is Mn(2+).

The protein localises to the mitochondrion matrix. The enzyme catalyses (S)-malate + NAD(+) = pyruvate + CO2 + NADH. The catalysed reaction is oxaloacetate + H(+) = pyruvate + CO2. Its function is as follows. NAD-dependent mitochondrial malic enzyme that catalyzes the oxidative decarboxylation of malate to pyruvate. In Saccharomyces cerevisiae (strain ATCC 204508 / S288c) (Baker's yeast), this protein is NAD-dependent malic enzyme, mitochondrial (MAE1).